Here is a 1050-residue protein sequence, read N- to C-terminus: Transcription intermediary factor 1-alpha (1050 aa).

Lys-7 is covalently cross-linked (Glycyl lysine isopeptide (Lys-Gly) (interchain with G-Cter in SUMO2)). Low complexity predominate over residues 15–30; that stretch reads ASAAASGGPSAAPSGE. A disordered region spans residues 15-44; sequence ASAAASGGPSAAPSGENEAESRQGPDSERG. Residues 33 to 44 show a composition bias toward basic and acidic residues; sequence AESRQGPDSERG. The segment at 56-82 adopts an RING-type zinc-finger fold; sequence CAVCHQNIQSRAPKLLPCLHSFCQRCL. At Thr-101 the chain carries Phosphothreonine. Ser-110 bears the Phosphoserine mark. B box-type zinc fingers lie at residues 158 to 211 and 218 to 259; these read KSNQ…VSPE and QRPV…YQFI. Zn(2+) contacts are provided by Cys-163, Cys-166, Cys-187, and His-200. Lys-205 participates in a covalent cross-link: Glycyl lysine isopeptide (Lys-Gly) (interchain with G-Cter in SUMO2). Residues Cys-223, His-226, Cys-246, and His-251 each contribute to the Zn(2+) site. Lys-276 is covalently cross-linked (Glycyl lysine isopeptide (Lys-Gly) (interchain with G-Cter in SUMO2)). Residues 289–359 are a coiled coil; that stretch reads NQIQNRIIEV…AGLSKQLEHV (71 aa). Residues 429-456 form a disordered region; it reads ESQPQMPKQNPVVEQNSQPPSGLSSNQL. Polar residues predominate over residues 431–456; that stretch reads QPQMPKQNPVVEQNSQPPSGLSSNQL. Residues Lys-436 and Lys-458 each participate in a glycyl lysine isopeptide (Lys-Gly) (interchain with G-Cter in SUMO2) cross-link. Residue Arg-469 is modified to Omega-N-methylarginine. Composition is skewed to low complexity over residues 476–490 and 499–510; these read QVMA…RPAP and QGPIQQPSISHQ. The interval 476-550 is disordered; sequence QVMAQRQQVQ…PPNQNIPRQA (75 aa). Positions 526-535 are enriched in pro residues; sequence PNGPVLPPHP. A Glycyl lysine isopeptide (Lys-Gly) (interchain with G-Cter in SUMO2) cross-link involves residue Lys-552. The tract at residues 571–594 is disordered; that stretch reads ISSGQGTPSTTNSTSSTPSSPTIT. Over residues 577 to 594 the composition is skewed to low complexity; it reads TPSTTNSTSSTPSSPTIT. A Glycyl lysine isopeptide (Lys-Gly) (interchain with G-Cter in SUMO2) cross-link involves residue Lys-641. The interval 643 to 712 is disordered; that stretch reads TNIDHGQPRP…PAGADSTHKV (70 aa). Ser-654, Ser-660, and Ser-667 each carry phosphoserine. Residues 654–666 show a composition bias toward polar residues; the sequence is SNRTVQSPNSSVP. The span at 685-707 shows a compositional bias: low complexity; that stretch reads SPSASSVGSRGSSGSSSKPAGAD. Residues Lys-702 and Lys-711 each participate in a glycyl lysine isopeptide (Lys-Gly) (interchain with G-Cter in SUMO2) cross-link. Residue Lys-723 forms a Glycyl lysine isopeptide (Lys-Gly) (interchain with G-Cter in SUMO1); alternate linkage. A Glycyl lysine isopeptide (Lys-Gly) (interchain with G-Cter in SUMO2); alternate cross-link involves residue Lys-723. A Glycyl lysine isopeptide (Lys-Gly) (interchain with G-Cter in SUMO2) cross-link involves residue Lys-741. Phosphoserine is present on Ser-744. The segment at 754–779 is nuclear receptor binding site (NRBS); that stretch reads NYPRSILTSLLLNSSQSSTSEETVLR. A disordered region spans residues 766–824; sequence NSSQSSTSEETVLRSDAPDSTGDQPGLHQDNSSNGKSEWLDPSQKSPLHVGETRKEDDP. Ser-768 is subject to Phosphoserine; by ATM. Residue Lys-801 forms a Glycyl lysine isopeptide (Lys-Gly) (interchain with G-Cter in SUMO2) linkage. Ser-808 carries the phosphoserine modification. Residue Lys-810 forms a Glycyl lysine isopeptide (Lys-Gly) (interchain with G-Cter in SUMO2) linkage. Ser-811 is modified (phosphoserine). At Thr-818 the chain carries Phosphothreonine. The segment at 826-873 adopts a PHD-type zinc-finger fold; the sequence is EDWCAVCQNGGELLCCEKCPKVFHLSCHVPTLTNFPSGEWICTFCRDL. The interval 834 to 840 is interaction with histone H3 that is not methylated at 'Lys-4' (H3K4me0); that stretch reads NGGELLC. Lys-875 participates in a covalent cross-link: Glycyl lysine isopeptide (Lys-Gly) (interchain with G-Cter in SUMO2). A Nuclear localization signal motif is present at residues 891–907; the sequence is KKKTEGLVKLTPIDKRK. The Bromo domain occupies 899–1004; it reads KLTPIDKRKC…NYFEELLKNL (106 aa). Lys-949 participates in a covalent cross-link: Glycyl lysine isopeptide (Lys-Gly) (interchain with G-Cter in SUMO2). The interaction with histone H3 that is acetylated at 'Lys-23' (H3K23ac) stretch occupies residues 979 to 980; sequence FN. A Glycyl lysine isopeptide (Lys-Gly) (interchain with G-Cter in SUMO2) cross-link involves residue Lys-992. The span at 1011–1026 shows a compositional bias: basic and acidic residues; sequence PKPEFRNESEDNKFSD. The interval 1011–1036 is disordered; it reads PKPEFRNESEDNKFSDDSDDDFVQPR. Ser-1019, Ser-1025, and Ser-1028 each carry phosphoserine. Lys-1041 participates in a covalent cross-link: Glycyl lysine isopeptide (Lys-Gly) (interchain with G-Cter in SUMO2). Residue Ser-1042 is modified to Phosphoserine.

In terms of assembly, interacts with CARM1, NCOA2/GRIP1, PML, KAT5/TIP60, BRD7, CBX1, CBX3 and CBX5. Part of a coactivator complex containing TRIM24, NCOA2 and CARM1. Interacts with NR3C2/MCR. Interacts with the ligand-binding domain of estrogen receptors (in vitro). Interaction with DNA-bound estrogen receptors requires the presence of estradiol. Interacts with AR and p53/TP53. Interacts (via bromo domain) with histone H3 (via N-terminus), provided that it is not methylated at 'Lys-4' (H3K4me0). Does not interact with histone H3 that is methylated at 'Lys-4' (H3K4me1, H3K4me2 or H3K4me3). Interacts (via bromo domain) with histone H3 (via N-terminus) that is acetylated at 'Lys-23' (H3K23ac). Has the highest affinity for histone H3 that is both unmodified at 'Lys-4' (H3K4me0) and acetylated at 'Lys-23' (H3K23ac). Has very low affinity for histone H3 that is methylated at 'Lys-9' (H3K9me), or acetylated at both 'Lys-9' (H3K9ac) and 'Lys-14' (H3K14ac), or acetylated at 'Lys-27' (H3K27ac) (in vitro). Interacts with TRIM16. Post-translationally, phosphorylated at Ser-768 by ATM kinase induces ubiquitination and degradation during DNA damage. Sumoylated. In terms of processing, undergoes ubiquitination-mediated degradation in response to DNA damage.

It localises to the nucleus. The protein localises to the cytoplasm. Its subcellular location is the mitochondrion. It catalyses the reaction S-ubiquitinyl-[E2 ubiquitin-conjugating enzyme]-L-cysteine + [acceptor protein]-L-lysine = [E2 ubiquitin-conjugating enzyme]-L-cysteine + N(6)-ubiquitinyl-[acceptor protein]-L-lysine.. It functions in the pathway protein modification; protein ubiquitination. Transcriptional coactivator that interacts with numerous nuclear receptors and coactivators and modulates the transcription of target genes. Interacts with chromatin depending on histone H3 modifications, having the highest affinity for histone H3 that is both unmodified at 'Lys-4' (H3K4me0) and acetylated at 'Lys-23' (H3K23ac). Has E3 protein-ubiquitin ligase activity. During the DNA damage response, participates in an autoregulatory feedback loop with TP53. Early in response to DNA damage, ATM kinase phosphorylates TRIM24 leading to its ubiquitination and degradation. After sufficient DNA repair has occurred, TP53 activates TRIM24 transcription, ultimately leading to TRIM24-mediated TP53 ubiquitination and degradation. Plays a role in the regulation of cell proliferation and apoptosis, at least in part via its effects on p53/TP53 levels. Up-regulates ligand-dependent transcription activation by AR, GCR/NR3C1, thyroid hormone receptor (TR) and ESR1. Modulates transcription activation by retinoic acid (RA) receptors, including RARA. Plays a role in regulating retinoic acid-dependent proliferation of hepatocytes. Also participates in innate immunity by mediating the specific 'Lys-63'-linked ubiquitination of TRAF3 leading to activation of downstream signal transduction of the type I IFN pathway. Additionally, negatively regulates NLRP3/CASP1/IL-1beta-mediated pyroptosis and cell migration probably by ubiquitinating NLRP3. The polypeptide is Transcription intermediary factor 1-alpha (TRIM24) (Homo sapiens (Human)).